The following is a 287-amino-acid chain: Cyclopropane mycolic acid synthase 1 (287 aa).

S-adenosyl-L-methionine is bound by residues 33-34 (YS), 68-76 (LLDVGCGWG), 94-99 (TLSKNQ), and 123-124 (WE). The active site involves Cys-269.

It belongs to the CFA/CMAS family. In terms of assembly, homodimer.

Its subcellular location is the cytoplasm. The enzyme catalyses a 1-acyl-2-(9Z)-enoyl-sn-glycero-3-phospholipid + S-adenosyl-L-methionine = a 1-acyl-2-(9-cyclopronane)-acyl-sn-glycero-3-phospholipid + S-adenosyl-L-homocysteine + H(+). It participates in lipid metabolism; mycolic acid biosynthesis. Its function is as follows. Catalyzes the conversion of a double bond to a cyclopropane ring at the distal position of an alpha mycolic acid via the transfer of a methylene group from S-adenosyl-L-methionine. Cyclopropanated mycolic acids are key factors participating in cell envelope permeability, host immunomodulation and persistence. The chain is Cyclopropane mycolic acid synthase 1 (cmaA1) from Mycobacterium tuberculosis (strain CDC 1551 / Oshkosh).